Reading from the N-terminus, the 65-residue chain is UPF0434 protein VFMJ11_A0475 (65 aa).

It belongs to the UPF0434 family.

In Aliivibrio fischeri (strain MJ11) (Vibrio fischeri), this protein is UPF0434 protein VFMJ11_A0475.